We begin with the raw amino-acid sequence, 121 residues long: MAMKIRLARGGSKKRPFYRIVAADSRMPRDGRFIEKLGTYNPLLPKDSEERVKMDIEKIQAWLDKGAQPTDRVARMLEAAGVREKTERNNPNKAKPGKKAQERAEEKAAKAAEAAEAADAE.

A disordered region spans residues 80 to 121; the sequence is AGVREKTERNNPNKAKPGKKAQERAEEKAAKAAEAAEAADAE. Composition is skewed to basic and acidic residues over residues 81–90 and 99–110; these read GVREKTERNN and KAQERAEEKAAK.

This sequence belongs to the bacterial ribosomal protein bS16 family.

In Ruegeria sp. (strain TM1040) (Silicibacter sp.), this protein is Small ribosomal subunit protein bS16.